The chain runs to 198 residues: FMN-dependent NADH:quinone oxidoreductase (198 aa).

Residues Ser-10, 16–18 (SQS), 94–97 (MYNF), and 138–141 (TRGG) each bind FMN.

It belongs to the azoreductase type 1 family. As to quaternary structure, homodimer. Requires FMN as cofactor.

It carries out the reaction 2 a quinone + NADH + H(+) = 2 a 1,4-benzosemiquinone + NAD(+). It catalyses the reaction N,N-dimethyl-1,4-phenylenediamine + anthranilate + 2 NAD(+) = 2-(4-dimethylaminophenyl)diazenylbenzoate + 2 NADH + 2 H(+). Quinone reductase that provides resistance to thiol-specific stress caused by electrophilic quinones. Its function is as follows. Also exhibits azoreductase activity. Catalyzes the reductive cleavage of the azo bond in aromatic azo compounds to the corresponding amines. This is FMN-dependent NADH:quinone oxidoreductase from Shewanella baltica (strain OS223).